Reading from the N-terminus, the 327-residue chain is Alkanal monooxygenase beta chain (327 aa).

Belongs to the bacterial luciferase oxidoreductase family. Heterodimer of an alpha and a beta chain.

It carries out the reaction a long-chain fatty aldehyde + FMNH2 + O2 = a long-chain fatty acid + hnu + FMN + H2O + 2 H(+). Functionally, light-emitting reaction in luminous bacteria. The specific role of the beta subunit is unknown, but it is absolutely required for bioluminescence activity. This is Alkanal monooxygenase beta chain (luxB) from Photorhabdus luminescens (Xenorhabdus luminescens).